The sequence spans 671 residues: METSRSRGGGGAVSERGGAGASVGVCRRKAEAGAGTGTLAADMDLHCDCAAETPAAEPPSGKINKAAFKLFKKRKSGGTMPSIFGVKNKGDGKSSGPTGLVRSRTHDGLAEVLVLESGRKEEPRGGGDSGGGGGGRPNPGPPRAAGPGGGSLASSSVAKSHSFFSLLKKNGRSENGKGEPVDASKAGGKQKRGLRGLFSGMRWHRKDKRAKAEAAEGRAPGGGLILPGSLTASLECVKEETPRAAREPEEPSQDAPRDPAGEPAGGEEVPAPADRAPARSCREAEGLAHPGDTGARGEDAAGHRRAEPGPGEVRTAEDASRTGAVPVKTVPLVDSEGGSGRAPAAPDPASVDPPSDPSADRICLMFSDVTSLKSFDSLTGCGDIIADQEEEAGPSCDKHVPGPGKPALSKKNPGVVAYQGGGEEMASPDEVDDTYLQEFWDMLSQTEEQGPEPQEGAAKVAAALETKVVPETPKDTRCVEAAKDASSVKRRRLNRIPIEPHPKEEPKHPEKEQQEGVPNSDEGYWDSTTPGPEEDSSSSGKKAGIPRDSYSGDALYDLYADPDGSPATLPGGKDNEETSSLSRLKPVSPGTITCPLRTPGSLLKDSKIPISIKHLTNLPSSHPVVHQQPSRSEMPRTKIPVSKVLVRRVSNRGLAGTTIRATACHDSAKKL.

Disordered stretches follow at residues 1–24, 76–358, 391–414, and 444–598; these read METSRSRGGGGAVSERGGAGASVG, SGGT…SDPS, EAGPSCDKHVPGPGKPALSKKNPG, and SQTE…PLRT. 2 stretches are compositionally biased toward gly residues: residues 7–21 and 126–137; these read RGGGGAVSERGGAGA and GGDSGGGGGGRP. Ser162 carries the post-translational modification Phosphoserine. Over residues 171 to 182 the composition is skewed to basic and acidic residues; the sequence is GRSENGKGEPVD. Phosphoserine occurs at positions 229 and 233. Basic and acidic residues-rich tracts occupy residues 236–260, 276–286, and 295–307; these read CVKEETPRAAREPEEPSQDAPRDPA, APARSCREAEG, and ARGEDAAGHRRAE. Residues 342–353 are compositionally biased toward low complexity; it reads APAAPDPASVDP. Ser355 and Ser358 each carry phosphoserine. A compositionally biased stretch (low complexity) spans 447–458; it reads EEQGPEPQEGAA. Basic and acidic residues-rich tracts occupy residues 472–487 and 498–514; these read TPKDTRCVEAAKDASS and IEPHPKEEPKHPEKEQQ.

The protein belongs to the Amer family. As to quaternary structure, interacts with APC.

Its subcellular location is the cell membrane. Functionally, negative regulator of the canonical Wnt signaling pathway involved in neuroectodermal patterning. Acts by specifically binding phosphatidylinositol 4,5-bisphosphate (PtdIns(4,5)P2), translocating to the cell membrane and interacting with key regulators of the canonical Wnt signaling pathway, such as components of the beta-catenin destruction complex. In Homo sapiens (Human), this protein is APC membrane recruitment protein 2 (AMER2).